Reading from the N-terminus, the 312-residue chain is Heme oxygenase 2 (312 aa).

Position 2 is an N-acetylserine (S2). S2 bears the Phosphoserine mark. H41 is a binding site for heme b. 2 HRM repeats span residues 260–265 (KCPYYA) and 277–282 (SCPFRA). 2 positions are modified to S-nitrosocysteine: C261 and C278.

Belongs to the heme oxygenase family. Post-translationally, S-nitrosylated by BLVRB.

It is found in the microsome. The protein localises to the endoplasmic reticulum. It catalyses the reaction heme b + 3 reduced [NADPH--hemoprotein reductase] + 3 O2 = biliverdin IXalpha + CO + Fe(2+) + 3 oxidized [NADPH--hemoprotein reductase] + 3 H2O + H(+). Heme oxygenase cleaves the heme ring at the alpha methene bridge to form biliverdin. Biliverdin is subsequently converted to bilirubin by biliverdin reductase. Under physiological conditions, the activity of heme oxygenase is highest in the spleen, where senescent erythrocytes are sequestrated and destroyed. Heme oxygenase 2 could be implicated in the production of carbon monoxide in brain where it could act as a neurotransmitter. This is Heme oxygenase 2 (HMOX2) from Oryctolagus cuniculus (Rabbit).